Consider the following 281-residue polypeptide: Phosphatidylglycerol--prolipoprotein diacylglyceryl transferase (281 aa).

7 helical membrane-spanning segments follow: residues 11 to 31 (IIFTIGPVSARWYGFMYVISF), 57 to 77 (LLYAIFLGSCIGGRIGYIIFY), 89 to 109 (VFYIWEGGMSFHGGLIGAIIV), 121 to 141 (ILEISDFITPLIPFGLGAGRI), 194 to 214 (PTQLYEFFLEGILLFFIIYFF), 222 to 242 (GSISGLFLIFYGLFRIFIEFF), and 255 to 275 (IITMGQILSLPMIIAGLIIMY). A 1,2-diacyl-sn-glycero-3-phospho-(1'-sn-glycerol) is bound at residue R140.

It belongs to the Lgt family.

The protein localises to the cell inner membrane. It carries out the reaction L-cysteinyl-[prolipoprotein] + a 1,2-diacyl-sn-glycero-3-phospho-(1'-sn-glycerol) = an S-1,2-diacyl-sn-glyceryl-L-cysteinyl-[prolipoprotein] + sn-glycerol 1-phosphate + H(+). The protein operates within protein modification; lipoprotein biosynthesis (diacylglyceryl transfer). In terms of biological role, catalyzes the transfer of the diacylglyceryl group from phosphatidylglycerol to the sulfhydryl group of the N-terminal cysteine of a prolipoprotein, the first step in the formation of mature lipoproteins. This Buchnera aphidicola subsp. Acyrthosiphon pisum (strain Tuc7) protein is Phosphatidylglycerol--prolipoprotein diacylglyceryl transferase.